Consider the following 130-residue polypeptide: DNA-directed RNA polymerase subunit omega (130 aa).

Disordered regions lie at residues 79 to 98 and 109 to 130; these read EPEP…VDAD and EEEL…EEDE.

This sequence belongs to the RNA polymerase subunit omega family. In terms of assembly, the RNAP catalytic core consists of 2 alpha, 1 beta, 1 beta' and 1 omega subunit. When a sigma factor is associated with the core the holoenzyme is formed, which can initiate transcription.

It catalyses the reaction RNA(n) + a ribonucleoside 5'-triphosphate = RNA(n+1) + diphosphate. Functionally, promotes RNA polymerase assembly. Latches the N- and C-terminal regions of the beta' subunit thereby facilitating its interaction with the beta and alpha subunits. The sequence is that of DNA-directed RNA polymerase subunit omega (rpoZ) from Bradyrhizobium diazoefficiens (strain JCM 10833 / BCRC 13528 / IAM 13628 / NBRC 14792 / USDA 110).